The sequence spans 525 residues: GMP synthase [glutamine-hydrolyzing] (525 aa).

The Glutamine amidotransferase type-1 domain maps to 8–207 (KILILDFGSQ…ALDICGCAAN (200 aa)). The active-site Nucleophile is the cysteine 85. Catalysis depends on residues histidine 181 and glutamate 183. The 193-residue stretch at 208 to 400 (WKPSSIIEDA…LGLPYNMLYR (193 aa)) folds into the GMPS ATP-PPase domain. Position 235 to 241 (235 to 241 (SGGVDSS)) interacts with ATP.

In terms of assembly, homodimer.

The enzyme catalyses XMP + L-glutamine + ATP + H2O = GMP + L-glutamate + AMP + diphosphate + 2 H(+). It functions in the pathway purine metabolism; GMP biosynthesis; GMP from XMP (L-Gln route): step 1/1. In terms of biological role, catalyzes the synthesis of GMP from XMP. The protein is GMP synthase [glutamine-hydrolyzing] of Shewanella sp. (strain ANA-3).